The chain runs to 105 residues: Guanyl-specific ribonuclease Ms (105 aa).

2 disulfides stabilise this stretch: Cys-3–Cys-11 and Cys-7–Cys-102. The active site involves His-39. Residue Glu-57 is the Proton acceptor of the active site. His-91 functions as the Proton donor in the catalytic mechanism.

It belongs to the ribonuclease N1/T1 family.

It carries out the reaction [RNA] containing guanosine + H2O = an [RNA fragment]-3'-guanosine-3'-phosphate + a 5'-hydroxy-ribonucleotide-3'-[RNA fragment].. The sequence is that of Guanyl-specific ribonuclease Ms from Aspergillus phoenicis (Aspergillus saitoi).